The following is a 443-amino-acid chain: Trigger factor (443 aa).

In terms of domain architecture, PPIase FKBP-type spans 168-254 (GDFVTIDFEG…IKNLKEKKLP (87 aa)).

This sequence belongs to the FKBP-type PPIase family. Tig subfamily.

It is found in the cytoplasm. It catalyses the reaction [protein]-peptidylproline (omega=180) = [protein]-peptidylproline (omega=0). In terms of biological role, involved in protein export. Acts as a chaperone by maintaining the newly synthesized protein in an open conformation. Functions as a peptidyl-prolyl cis-trans isomerase. This chain is Trigger factor, found in Syntrophus aciditrophicus (strain SB).